A 169-amino-acid polypeptide reads, in one-letter code: Allophycocyanin subunit beta-18 (169 aa).

Position 72 is an N4-methylasparagine (Asn-72). Cys-82 serves as a coordination point for (2R,3E)-phycocyanobilin.

Belongs to the phycobiliprotein family. In terms of assembly, heterodimer of ApcE and this beta chain. Post-translationally, contains one covalently linked bilin chromophore. The chromophore is added by phycocyanobilin lyase CpcUS.

Its subcellular location is the cellular thylakoid membrane. A variant beta-allophycocyanin (AP) which forms a complex with ApcE, a phycobilisome terminal emitter that influences energy transfer to photosystem II. This is Allophycocyanin subunit beta-18 (apcF) from Picosynechococcus sp. (strain ATCC 27264 / PCC 7002 / PR-6) (Agmenellum quadruplicatum).